The chain runs to 384 residues: Histidinol-phosphate aminotransferase 1 (384 aa).

N6-(pyridoxal phosphate)lysine is present on lysine 233.

It belongs to the class-II pyridoxal-phosphate-dependent aminotransferase family. Histidinol-phosphate aminotransferase subfamily. In terms of assembly, homodimer. Pyridoxal 5'-phosphate is required as a cofactor.

It catalyses the reaction L-histidinol phosphate + 2-oxoglutarate = 3-(imidazol-4-yl)-2-oxopropyl phosphate + L-glutamate. Its pathway is amino-acid biosynthesis; L-histidine biosynthesis; L-histidine from 5-phospho-alpha-D-ribose 1-diphosphate: step 7/9. The protein is Histidinol-phosphate aminotransferase 1 of Thiobacillus denitrificans (strain ATCC 25259 / T1).